We begin with the raw amino-acid sequence, 108 residues long: MMKGGMAGLMKQAQLMQEKMQKLQEEIANAEVTGQSGAGLVSVVMTGRHDVRRVTLDDSLMQEDKEVLEDLIAAAVNDAVRKIEQNNQEKMAGMTAGMGLPPGFKMPF.

This sequence belongs to the YbaB/EbfC family. Homodimer.

Its subcellular location is the cytoplasm. The protein localises to the nucleoid. Functionally, binds to DNA and alters its conformation. May be involved in regulation of gene expression, nucleoid organization and DNA protection. The polypeptide is Nucleoid-associated protein Avin_19840 (Azotobacter vinelandii (strain DJ / ATCC BAA-1303)).